A 310-amino-acid chain; its full sequence is Methionyl-tRNA formyltransferase (310 aa).

Residue 109-112 (SLLP) coordinates (6S)-5,6,7,8-tetrahydrofolate.

This sequence belongs to the Fmt family.

It catalyses the reaction L-methionyl-tRNA(fMet) + (6R)-10-formyltetrahydrofolate = N-formyl-L-methionyl-tRNA(fMet) + (6S)-5,6,7,8-tetrahydrofolate + H(+). Its function is as follows. Attaches a formyl group to the free amino group of methionyl-tRNA(fMet). The formyl group appears to play a dual role in the initiator identity of N-formylmethionyl-tRNA by promoting its recognition by IF2 and preventing the misappropriation of this tRNA by the elongation apparatus. The polypeptide is Methionyl-tRNA formyltransferase (Macrococcus caseolyticus (strain JCSC5402) (Macrococcoides caseolyticum)).